A 158-amino-acid chain; its full sequence is NADPH-dependent 7-cyano-7-deazaguanine reductase (158 aa).

Residues 1 to 13 (MAKRSNTTMTSAG) show a composition bias toward polar residues. The segment at 1 to 37 (MAKRSNTTMTSAGLQLGREVAPPDSPETAKLDRVPNP) is disordered. The span at 27–37 (ETAKLDRVPNP) shows a compositional bias: basic and acidic residues. The Thioimide intermediate role is filled by Cys-56. The Proton donor role is filled by Asp-63. Substrate-binding positions include 78–80 (VES) and 97–98 (HE).

This sequence belongs to the GTP cyclohydrolase I family. QueF type 1 subfamily.

The protein resides in the cytoplasm. The catalysed reaction is 7-aminomethyl-7-carbaguanine + 2 NADP(+) = 7-cyano-7-deazaguanine + 2 NADPH + 3 H(+). The protein operates within tRNA modification; tRNA-queuosine biosynthesis. Catalyzes the NADPH-dependent reduction of 7-cyano-7-deazaguanine (preQ0) to 7-aminomethyl-7-deazaguanine (preQ1). The chain is NADPH-dependent 7-cyano-7-deazaguanine reductase from Bradyrhizobium sp. (strain ORS 278).